The chain runs to 64 residues: Large ribosomal subunit protein eL37 (64 aa).

4 residues coordinate Zn(2+): Cys20, Cys23, Cys35, and Cys38. The C4-type zinc finger occupies 20 to 38 (CRRCGRRAYHVRKKACAAC).

Belongs to the eukaryotic ribosomal protein eL37 family. The cofactor is Zn(2+).

Its function is as follows. Binds to the 23S rRNA. In Methanococcus vannielii (strain ATCC 35089 / DSM 1224 / JCM 13029 / OCM 148 / SB), this protein is Large ribosomal subunit protein eL37.